We begin with the raw amino-acid sequence, 648 residues long: ATP-dependent zinc metalloprotease FtsH 4 (648 aa).

At 1–6 (MKQSHK) the chain is on the cytoplasmic side. Residues 7-27 (TLLLWVLLIMMFLAIWQFLSP) form a helical membrane-spanning segment. Residues 28–111 (DSRPATQVAF…VFFEKEDTSP (84 aa)) are Periplasmic-facing. The chain crosses the membrane as a helical span at residues 112 to 132 (FWPGAIMYLLPTVFLLVMFYL). At 133–648 (FMRQLQAGGG…FGTPKPAPST (516 aa)) the chain is on the cytoplasmic side. 205-212 (GPPGTGKT) lines the ATP pocket. Zn(2+) is bound at residue His-427. Glu-428 is an active-site residue. Positions 431 and 504 each coordinate Zn(2+). The interval 622 to 648 (YSDRDRAAKEKRRAASIFGTPKPAPST) is disordered.

This sequence in the central section; belongs to the AAA ATPase family. The protein in the C-terminal section; belongs to the peptidase M41 family. In terms of assembly, homohexamer. Zn(2+) serves as cofactor.

It localises to the cell inner membrane. Its function is as follows. Acts as a processive, ATP-dependent zinc metallopeptidase for both cytoplasmic and membrane proteins. Plays a role in the quality control of integral membrane proteins. The polypeptide is ATP-dependent zinc metalloprotease FtsH 4 (Sorangium cellulosum (strain So ce56) (Polyangium cellulosum (strain So ce56))).